Consider the following 602-residue polypeptide: Elongation factor 4 (602 aa).

The 183-residue stretch at 7 to 189 folds into the tr-type G domain; that stretch reads SRLRNFCIIA…AVVERVPPPK (183 aa). GTP is bound by residues 19 to 24 and 136 to 139; these read DHGKST and NKVD.

The protein belongs to the TRAFAC class translation factor GTPase superfamily. Classic translation factor GTPase family. LepA subfamily.

The protein resides in the cell inner membrane. It catalyses the reaction GTP + H2O = GDP + phosphate + H(+). In terms of biological role, required for accurate and efficient protein synthesis under certain stress conditions. May act as a fidelity factor of the translation reaction, by catalyzing a one-codon backward translocation of tRNAs on improperly translocated ribosomes. Back-translocation proceeds from a post-translocation (POST) complex to a pre-translocation (PRE) complex, thus giving elongation factor G a second chance to translocate the tRNAs correctly. Binds to ribosomes in a GTP-dependent manner. The protein is Elongation factor 4 of Prochlorococcus marinus (strain MIT 9211).